We begin with the raw amino-acid sequence, 432 residues long: Gamma-glutamyl phosphate reductase (432 aa).

Belongs to the gamma-glutamyl phosphate reductase family.

The protein localises to the cytoplasm. The enzyme catalyses L-glutamate 5-semialdehyde + phosphate + NADP(+) = L-glutamyl 5-phosphate + NADPH + H(+). It participates in amino-acid biosynthesis; L-proline biosynthesis; L-glutamate 5-semialdehyde from L-glutamate: step 2/2. Functionally, catalyzes the NADPH-dependent reduction of L-glutamate 5-phosphate into L-glutamate 5-semialdehyde and phosphate. The product spontaneously undergoes cyclization to form 1-pyrroline-5-carboxylate. The polypeptide is Gamma-glutamyl phosphate reductase (Methylorubrum extorquens (strain CM4 / NCIMB 13688) (Methylobacterium extorquens)).